The chain runs to 294 residues: N-acetylmuramic acid 6-phosphate etherase (294 aa).

In terms of domain architecture, SIS spans 54-217 (VIKSFEEEGR…STASMIGVGK (164 aa)). The active-site Proton donor is glutamate 82. Glutamate 113 is an active-site residue.

It belongs to the GCKR-like family. MurNAc-6-P etherase subfamily. Homodimer.

It catalyses the reaction N-acetyl-D-muramate 6-phosphate + H2O = N-acetyl-D-glucosamine 6-phosphate + (R)-lactate. Its pathway is amino-sugar metabolism; N-acetylmuramate degradation. Specifically catalyzes the cleavage of the D-lactyl ether substituent of MurNAc 6-phosphate, producing GlcNAc 6-phosphate and D-lactate. The polypeptide is N-acetylmuramic acid 6-phosphate etherase (Bacillus cereus (strain ATCC 14579 / DSM 31 / CCUG 7414 / JCM 2152 / NBRC 15305 / NCIMB 9373 / NCTC 2599 / NRRL B-3711)).